A 421-amino-acid polypeptide reads, in one-letter code: Fasciclin-like arabinogalactan protein ARB_02922 (421 aa).

Residues 1–17 (MLLYYILVALWATVTYA) form the signal peptide. FAS1 domains follow at residues 18 to 167 (KSFS…DRPL) and 169 to 296 (LPQS…SDVL). N-linked (GlcNAc...) asparagine glycans are attached at residues asparagine 52, asparagine 75, asparagine 80, asparagine 120, asparagine 145, asparagine 181, asparagine 223, and asparagine 300. A disordered region spans residues 300-401 (NDTAKPVPNA…NTPQPGAAAT (102 aa)). Gly residues-rich tracts occupy residues 344-356 (TSGG…GGGE) and 372-387 (SGGG…GGPG). Residues 388 to 401 (PTATNTPQPGAAAT) show a composition bias toward low complexity. Glycine 397 is lipidated: GPI-anchor amidated glycine. A propeptide spans 398-421 (AAATERAKAGLAAVVGLGVVLINA) (removed in mature form).

The protein belongs to the fasciclin-like AGP family.

It is found in the cell membrane. Functionally, may be a cell surface adhesion protein. This is Fasciclin-like arabinogalactan protein ARB_02922 from Arthroderma benhamiae (strain ATCC MYA-4681 / CBS 112371) (Trichophyton mentagrophytes).